We begin with the raw amino-acid sequence, 727 residues long: Probable acyl-activating enzyme 18, peroxisomal (727 aa).

The Microbody targeting signal motif lies at 725–727 (SRI).

It belongs to the ATP-dependent AMP-binding enzyme family. As to expression, expressed in flowers.

It localises to the peroxisome. In terms of biological role, may be involved in the peroxisomal activation of 2,4-dichlorophenoxybutyric acid (2,4-DB), a precursor of active auxins that inhibit root growth. In Arabidopsis thaliana (Mouse-ear cress), this protein is Probable acyl-activating enzyme 18, peroxisomal (AAE18).